The sequence spans 140 residues: Sex-regulated protein janus-B (140 aa).

R42 contributes to the substrate binding site. The active-site Proton acceptor is the H69. 110–112 (SRT) is a substrate binding site.

It belongs to the janus family. Germline cells of adult males.

Its function is as follows. JanA and janB regulate somatic sex differentiation. This chain is Sex-regulated protein janus-B (janB), found in Drosophila melanogaster (Fruit fly).